The sequence spans 265 residues: Acyl-[acyl-carrier-protein]--UDP-N-acetylglucosamine O-acyltransferase (265 aa).

This sequence belongs to the transferase hexapeptide repeat family. LpxA subfamily. As to quaternary structure, homotrimer.

It localises to the cytoplasm. It carries out the reaction a (3R)-hydroxyacyl-[ACP] + UDP-N-acetyl-alpha-D-glucosamine = a UDP-3-O-[(3R)-3-hydroxyacyl]-N-acetyl-alpha-D-glucosamine + holo-[ACP]. Its pathway is glycolipid biosynthesis; lipid IV(A) biosynthesis; lipid IV(A) from (3R)-3-hydroxytetradecanoyl-[acyl-carrier-protein] and UDP-N-acetyl-alpha-D-glucosamine: step 1/6. Functionally, involved in the biosynthesis of lipid A, a phosphorylated glycolipid that anchors the lipopolysaccharide to the outer membrane of the cell. This is Acyl-[acyl-carrier-protein]--UDP-N-acetylglucosamine O-acyltransferase from Polynucleobacter asymbioticus (strain DSM 18221 / CIP 109841 / QLW-P1DMWA-1) (Polynucleobacter necessarius subsp. asymbioticus).